Reading from the N-terminus, the 284-residue chain is Aquaporin NIP1-1 (284 aa).

The segment covering 1–12 (MAGGDNNSQTTN) has biased composition (polar residues). Residues 1–28 (MAGGDNNSQTTNGGSGHEQRAMEEGRKQ) form a disordered region. Positions 17-28 (HEQRAMEEGRKQ) are enriched in basic and acidic residues. The next 2 helical transmembrane spans lie at 50–70 (IIAE…AVTI) and 78–98 (ITFP…VYAV). Positions 107 to 109 (NPA) match the NPA 1 motif. 3 helical membrane passes run 129-149 (AAAQ…MFGG), 166-186 (SLVL…GVAT), and 194-214 (LAGL…GPIS). The NPA 2 signature appears at 219 to 221 (NPA). A helical membrane pass occupies residues 236–256 (IWVYIVGPVAGAVAGAWAYNI).

This sequence belongs to the MIP/aquaporin (TC 1.A.8) family. NIP (TC 1.A.8.12) subfamily. Expressed in leaves and at lower levels in roots and anthers.

Its subcellular location is the membrane. Functionally, aquaporins facilitate the transport of water and small neutral solutes across cell membranes. In Oryza sativa subsp. japonica (Rice), this protein is Aquaporin NIP1-1 (NIP1-1).